The following is a 174-amino-acid chain: 2-C-methyl-D-erythritol 2,4-cyclodiphosphate synthase (174 aa).

Residues D13, H15, and H61 each contribute to the a divalent metal cation site. 13 to 15 lines the 4-CDP-2-C-methyl-D-erythritol 2-phosphate pocket; that stretch reads DAH. Residues 75–77, 149–152, F156, and H159 each bind 4-CDP-2-C-methyl-D-erythritol 2-phosphate; these read DIG and TTTD.

It belongs to the IspF family. As to quaternary structure, homotrimer. Requires a divalent metal cation as cofactor.

It catalyses the reaction 4-CDP-2-C-methyl-D-erythritol 2-phosphate = 2-C-methyl-D-erythritol 2,4-cyclic diphosphate + CMP. Its pathway is isoprenoid biosynthesis; isopentenyl diphosphate biosynthesis via DXP pathway; isopentenyl diphosphate from 1-deoxy-D-xylulose 5-phosphate: step 4/6. Involved in the biosynthesis of isopentenyl diphosphate (IPP) and dimethylallyl diphosphate (DMAPP), two major building blocks of isoprenoid compounds. Catalyzes the conversion of 4-diphosphocytidyl-2-C-methyl-D-erythritol 2-phosphate (CDP-ME2P) to 2-C-methyl-D-erythritol 2,4-cyclodiphosphate (ME-CPP) with a corresponding release of cytidine 5-monophosphate (CMP). The chain is 2-C-methyl-D-erythritol 2,4-cyclodiphosphate synthase from Bifidobacterium longum (strain NCC 2705).